A 170-amino-acid polypeptide reads, in one-letter code: J domain-containing protein (170 aa).

The J domain maps to 17 to 82 (DYYALLGCDE…SKRALYDKWR (66 aa)). The interval 101–170 (QQSMHWSKPN…VLSKFRNYEI (70 aa)) is disordered. The segment covering 110-120 (NTKDRMLEGDG) has biased composition (basic and acidic residues). Over residues 121–134 (SKPSGPSSLGPSNP) the composition is skewed to low complexity.

This Bombyx mori (Silk moth) protein is J domain-containing protein (jdp).